Consider the following 490-residue polypeptide: Cobyric acid synthase (490 aa).

Positions 251-444 (GLTIAVIHLP…LHGIFANDAF (194 aa)) constitute a GATase cobBQ-type domain. C329 acts as the Nucleophile in catalysis. The active site involves H436.

The protein belongs to the CobB/CobQ family. CobQ subfamily.

It functions in the pathway cofactor biosynthesis; adenosylcobalamin biosynthesis. Functionally, catalyzes amidations at positions B, D, E, and G on adenosylcobyrinic A,C-diamide. NH(2) groups are provided by glutamine, and one molecule of ATP is hydrogenolyzed for each amidation. This is Cobyric acid synthase from Roseiflexus castenholzii (strain DSM 13941 / HLO8).